The chain runs to 288 residues: Acetyl-coenzyme A carboxylase carboxyl transferase subunit beta (288 aa).

Positions 34 to 288 (LWVKCSRCNE…ANILSLHGTN (255 aa)) constitute a CoA carboxyltransferase N-terminal domain. Zn(2+) contacts are provided by Cys-38, Cys-41, Cys-57, and Cys-60. The C4-type zinc finger occupies 38 to 60 (CSRCNEILYTKELDKNFKVCHKC).

It belongs to the AccD/PCCB family. As to quaternary structure, acetyl-CoA carboxylase is a heterohexamer composed of biotin carboxyl carrier protein (AccB), biotin carboxylase (AccC) and two subunits each of ACCase subunit alpha (AccA) and ACCase subunit beta (AccD). Requires Zn(2+) as cofactor.

Its subcellular location is the cytoplasm. The enzyme catalyses N(6)-carboxybiotinyl-L-lysyl-[protein] + acetyl-CoA = N(6)-biotinyl-L-lysyl-[protein] + malonyl-CoA. Its pathway is lipid metabolism; malonyl-CoA biosynthesis; malonyl-CoA from acetyl-CoA: step 1/1. Functionally, component of the acetyl coenzyme A carboxylase (ACC) complex. Biotin carboxylase (BC) catalyzes the carboxylation of biotin on its carrier protein (BCCP) and then the CO(2) group is transferred by the transcarboxylase to acetyl-CoA to form malonyl-CoA. The chain is Acetyl-coenzyme A carboxylase carboxyl transferase subunit beta from Desulforamulus reducens (strain ATCC BAA-1160 / DSM 100696 / MI-1) (Desulfotomaculum reducens).